Consider the following 398-residue polypeptide: MEQPKKVADRYLKREVLGQGTYGVVFKATDTKNGETVAIKKIRLGKEKEGVNVTALREIKLLKELKHPHIIELIDAFPHKENLHIVFEFMETDLEAVIRDRNLYLSPGDVKSYLQMILKGLEYCHGKWVLHRDMKPNNLLIGPNGQLKLADFGLARIFGSPGRKFTHQVFARWYRAPELLFGAKQYDGAVDVWAAGCIFAELLLRRPFLQGNSDIDQLSKIFAAFGTPKADQWPDMICLPDYVEYQFVPAPSLRSLLPTVSEDALDLLSKMFTYDPKSRISIQQALKHRYFTSAPSPTDPLKLPRPVSKQDAKSSDSKLEAIKVLSPAHKFRRVMPDRGKSGNGFKDQSVDVMRQASHDGQAPMSLDFTILAERPPNRPTITSADRSHLKRKLDLEFL.

The Protein kinase domain maps to 11 to 291 (YLKREVLGQG…IQQALKHRYF (281 aa)). ATP-binding positions include 17 to 25 (LGQGTYGVV) and K40. Position 22 is a phosphotyrosine (Y22). D133 acts as the Proton acceptor in catalysis. S160 is subject to Phosphoserine. Position 166 is a phosphothreonine (T166). The interval 296-318 (SPTDPLKLPRPVSKQDAKSSDSK) is disordered. Residues 308–318 (SKQDAKSSDSK) show a composition bias toward basic and acidic residues.

The protein belongs to the protein kinase superfamily. CMGC Ser/Thr protein kinase family. CDC2/CDKX subfamily. Post-translationally, autophosphorylated. In terms of tissue distribution, expressed at low levels in suspension cell culture, but not in plant organs.

Its subcellular location is the nucleus. It catalyses the reaction L-seryl-[protein] + ATP = O-phospho-L-seryl-[protein] + ADP + H(+). The catalysed reaction is L-threonyl-[protein] + ATP = O-phospho-L-threonyl-[protein] + ADP + H(+). The enzyme catalyses [DNA-directed RNA polymerase] + ATP = phospho-[DNA-directed RNA polymerase] + ADP + H(+). This chain is Cyclin-dependent kinase D-1 (CDKD-1), found in Arabidopsis thaliana (Mouse-ear cress).